Reading from the N-terminus, the 150-residue chain is Ribonuclease K6 (150 aa).

The N-terminal stretch at 1-23 (MVLCFPLLLLLLVLWGPVCLLHA) is a signal peptide. Histidine 38 acts as the Proton acceptor in catalysis. Cystine bridges form between cysteine 46-cysteine 104, cysteine 60-cysteine 114, cysteine 78-cysteine 129, and cysteine 85-cysteine 92. N-linked (GlcNAc...) asparagine glycosylation occurs at asparagine 55. Residues 61–65 (KHQNT) and lysine 86 contribute to the substrate site. A glycan (N-linked (GlcNAc...) asparagine) is linked at asparagine 100. Residue arginine 105 coordinates substrate. Histidine 145 serves as the catalytic Proton donor.

It belongs to the pancreatic ribonuclease family. Interacts (via N-terminus) with bacterial lipopolysaccharide (LPS).

The protein resides in the secreted. Its subcellular location is the lysosome. It localises to the cytoplasmic granule. Ribonuclease which shows a preference for the pyrimidines uridine and cytosine. Has potent antibacterial activity against a range of Gram-positive and Gram-negative bacteria, including P.aeruginosa, A.baumanii, M.luteus, S.aureus, E.faecalis, E.faecium, S.saprophyticus and E.coli. Causes loss of bacterial membrane integrity, and also promotes agglutination of Gram-negative bacteria. Probably contributes to urinary tract sterility. Bactericidal activity is independent of RNase activity. In Macaca mulatta (Rhesus macaque), this protein is Ribonuclease K6 (RNASE6).